The sequence spans 152 residues: SUZ RNA-binding domain-containing (152 aa).

Met1 carries the post-translational modification N-acetylmethionine. A disordered region spans residues 30–152 (TQKESRKSKS…DGSQGFKQRR (123 aa)). 3 positions are modified to phosphoserine: Ser37, Ser39, and Ser51. The 66-residue stretch at 42 to 107 (KVPIVIQDDS…ARKRILGSAS (66 aa)) folds into the SUZ domain. Residues 66-81 (PTSNGVVSSPNSTSRP) show a composition bias toward polar residues. The span at 89–100 (AQREAEYAEARK) shows a compositional bias: basic and acidic residues. 2 positions are modified to phosphoserine: Ser105 and Ser107. Positions 111-152 (EQEKPILDRPTRISQPEDSRQPNNVIRQPLGPDGSQGFKQRR) constitute an SUZ-C domain. Over residues 113–130 (EKPILDRPTRISQPEDSR) the composition is skewed to basic and acidic residues.

It belongs to the SZRD1 family.

The protein is SUZ RNA-binding domain-containing (SZRD1) of Homo sapiens (Human).